The chain runs to 202 residues: Urease accessory protein UreG (202 aa).

Residue 11-18 (GPVGSGKT) participates in GTP binding.

This sequence belongs to the SIMIBI class G3E GTPase family. UreG subfamily. Homodimer. UreD, UreF and UreG form a complex that acts as a GTP-hydrolysis-dependent molecular chaperone, activating the urease apoprotein by helping to assemble the nickel containing metallocenter of UreC. The UreE protein probably delivers the nickel.

The protein localises to the cytoplasm. Functionally, facilitates the functional incorporation of the urease nickel metallocenter. This process requires GTP hydrolysis, probably effectuated by UreG. This Prochlorococcus marinus (strain MIT 9313) protein is Urease accessory protein UreG.